Reading from the N-terminus, the 23-residue chain is Aldehyde dehydrogenase (23 aa).

The protein belongs to the aldehyde dehydrogenase family.

It carries out the reaction an aldehyde + NAD(+) + H2O = a carboxylate + NADH + 2 H(+). This is Aldehyde dehydrogenase from Moraxella sp. (strain TAE123).